Reading from the N-terminus, the 95-residue chain is Gas vesicle protein S (95 aa).

It belongs to the gas vesicle GvpA family.

The protein resides in the gas vesicle. In terms of biological role, probably a minor component of the gas vesicle. It is not clear what function gas vesicles perform in soil bacteria. Functionally, when a minimal gvp locus (gvpA2-gvpR-gvpN-gvpF-gvpG-gvpL-gvpS-gvpK-gvpJ-gvpT-gvpU, called pNL29) is expressed in E.coli gas vesicles are made. The sequence is that of Gas vesicle protein S from Priestia megaterium (Bacillus megaterium).